Reading from the N-terminus, the 346-residue chain is Phosphate acyltransferase (346 aa).

This sequence belongs to the PlsX family. In terms of assembly, homodimer. Probably interacts with PlsY.

The protein resides in the cytoplasm. The catalysed reaction is a fatty acyl-[ACP] + phosphate = an acyl phosphate + holo-[ACP]. The protein operates within lipid metabolism; phospholipid metabolism. Catalyzes the reversible formation of acyl-phosphate (acyl-PO(4)) from acyl-[acyl-carrier-protein] (acyl-ACP). This enzyme utilizes acyl-ACP as fatty acyl donor, but not acyl-CoA. The polypeptide is Phosphate acyltransferase (Brucella melitensis biotype 2 (strain ATCC 23457)).